An 860-amino-acid polypeptide reads, in one-letter code: Leucine--tRNA ligase (860 aa).

The 'HIGH' region motif lies at 42 to 52 (PYPSGRLHMGH). Positions 619 to 623 (KMSKS) match the 'KMSKS' region motif. Residue Lys622 participates in ATP binding.

Belongs to the class-I aminoacyl-tRNA synthetase family.

The protein localises to the cytoplasm. The catalysed reaction is tRNA(Leu) + L-leucine + ATP = L-leucyl-tRNA(Leu) + AMP + diphosphate. The chain is Leucine--tRNA ligase from Yersinia pestis bv. Antiqua (strain Angola).